The following is a 273-amino-acid chain: Large ribosomal subunit protein uL2 (273 aa).

The tract at residues 196–273 (GNSDHGLESS…SSKYIIERRK (78 aa)) is disordered. Basic residues-rich tracts occupy residues 209–220 (GRTRWMGRRPRN) and 255–264 (LKTRAPKKQS).

It belongs to the universal ribosomal protein uL2 family. Part of the 50S ribosomal subunit. Forms a bridge to the 30S subunit in the 70S ribosome.

In terms of biological role, one of the primary rRNA binding proteins. Required for association of the 30S and 50S subunits to form the 70S ribosome, for tRNA binding and peptide bond formation. It has been suggested to have peptidyltransferase activity; this is somewhat controversial. Makes several contacts with the 16S rRNA in the 70S ribosome. The protein is Large ribosomal subunit protein uL2 of Phocaeicola vulgatus (strain ATCC 8482 / DSM 1447 / JCM 5826 / CCUG 4940 / NBRC 14291 / NCTC 11154) (Bacteroides vulgatus).